Here is a 301-residue protein sequence, read N- to C-terminus: tRNA U34 carboxymethyltransferase (301 aa).

Carboxy-S-adenosyl-L-methionine is bound by residues Lys70, Trp84, Lys89, Gly108, Asp130 to Ser132, Val157 to Glu158, Tyr177, and Arg292.

The protein belongs to the class I-like SAM-binding methyltransferase superfamily. CmoB family. In terms of assembly, homotetramer.

It carries out the reaction carboxy-S-adenosyl-L-methionine + 5-hydroxyuridine(34) in tRNA = 5-carboxymethoxyuridine(34) in tRNA + S-adenosyl-L-homocysteine + H(+). Functionally, catalyzes carboxymethyl transfer from carboxy-S-adenosyl-L-methionine (Cx-SAM) to 5-hydroxyuridine (ho5U) to form 5-carboxymethoxyuridine (cmo5U) at position 34 in tRNAs. The sequence is that of tRNA U34 carboxymethyltransferase from Sulfurovum sp. (strain NBC37-1).